Here is a 216-residue protein sequence, read N- to C-terminus: MLKKNNKRKIFCSALVLGSFGFLAASFVSIIYVITKNKIQYQEQRYKNIIFNHIVPSNLHDNDIQRSCLILNNKLLGDKKNHYLWLAKKKQDITAVIFETIAPDGYSGIIKMVISLDIKNGKILGVRVLSHNETPGLGDKIDVNISNWITKFSGVKIFSLDERDLSLKKYGGNIDQFTGATITPLAVVNSIKRTIVLVKMLLSSKFSELTSCDNYE.

The chain crosses the membrane as a helical span at residues 14–34 (ALVLGSFGFLAASFVSIIYVI). Thr181 carries the post-translational modification FMN phosphoryl threonine.

It belongs to the RnfG family. As to quaternary structure, the complex is composed of six subunits: RnfA, RnfB, RnfC, RnfD, RnfE and RnfG. It depends on FMN as a cofactor.

Its subcellular location is the cell inner membrane. Part of a membrane-bound complex that couples electron transfer with translocation of ions across the membrane. The polypeptide is Ion-translocating oxidoreductase complex subunit G (Buchnera aphidicola subsp. Baizongia pistaciae (strain Bp)).